The following is a 202-amino-acid chain: Ras-related protein ORAB-1 (202 aa).

GTP is bound by residues 15–23 (GDSGVGKSC), 33–40 (YTESYIST), 63–67 (DTAGQ), 121–124 (NKCD), and 151–153 (SAK). An Effector region motif is present at residues 37–45 (YISTIGVDF). Residues 173-202 (MGPGATSGGSEKSNVNIQSTPVKSSGGGCC) are disordered. Polar residues predominate over residues 180-195 (GGSEKSNVNIQSTPVK). Residues Cys201 and Cys202 are each lipidated (S-geranylgeranyl cysteine).

The protein belongs to the small GTPase superfamily. Rab family.

The protein localises to the cell membrane. Its function is as follows. Protein transport. Probably involved in vesicular traffic. The chain is Ras-related protein ORAB-1 from Diplobatis ommata (Ocellated electric ray).